The chain runs to 281 residues: Probable splicing factor, arginine/serine-rich 2 (281 aa).

Positions 2–72 (VRVYIGRLPN…ERVILEFPRR (71 aa)) constitute an RRM 1 domain. 2 stretches are compositionally biased toward basic and acidic residues: residues 78-97 (EERS…KGGE) and 168-190 (KLQG…DRSR). Disordered regions lie at residues 78-100 (EERS…ERQF) and 168-281 (KLQG…SASP). Residues 112 to 186 (FRLVIDNLST…RKLKCTDETR (75 aa)) enclose the RRM 2 domain. Positions 191-215 (SRSPRRRSRSRSPTRSRSPPARRRS) are enriched in basic residues. The span at 216 to 225 (PGSDRSDRKS) shows a compositional bias: basic and acidic residues. Over residues 245 to 254 (RSRSGGRRSR) the composition is skewed to basic residues.

The protein belongs to the splicing factor SR family. Extensively phosphorylated on serine residues in the RS domain.

It localises to the nucleus. Plays a functionally redundant role in spermatogenesis and growth rate control. Required for the development of somatic gonad structures and for progression from larval stage to adulthood. The polypeptide is Probable splicing factor, arginine/serine-rich 2 (rsp-2) (Caenorhabditis elegans).